The chain runs to 412 residues: CCA-adding enzyme (412 aa).

Residues Ser41 and Lys44 each contribute to the ATP site. Positions 41 and 44 each coordinate CTP. Positions 53, 55, and 106 each coordinate Mg(2+). 3 residues coordinate ATP: His129, Lys149, and Tyr158. CTP is bound by residues His129, Lys149, and Tyr158.

This sequence belongs to the tRNA nucleotidyltransferase/poly(A) polymerase family. Archaeal CCA-adding enzyme subfamily. As to quaternary structure, homodimer. The cofactor is Mg(2+).

The catalysed reaction is a tRNA precursor + 2 CTP + ATP = a tRNA with a 3' CCA end + 3 diphosphate. It catalyses the reaction a tRNA with a 3' CCA end + 2 CTP + ATP = a tRNA with a 3' CCACCA end + 3 diphosphate. Catalyzes the addition and repair of the essential 3'-terminal CCA sequence in tRNAs without using a nucleic acid template. Adds these three nucleotides in the order of C, C, and A to the tRNA nucleotide-73, using CTP and ATP as substrates and producing inorganic pyrophosphate. tRNA 3'-terminal CCA addition is required both for tRNA processing and repair. Also involved in tRNA surveillance by mediating tandem CCA addition to generate a CCACCA at the 3' terminus of unstable tRNAs. While stable tRNAs receive only 3'-terminal CCA, unstable tRNAs are marked with CCACCA and rapidly degraded. The protein is CCA-adding enzyme of Saccharolobus islandicus (strain M.16.27) (Sulfolobus islandicus).